Here is a 197-residue protein sequence, read N- to C-terminus: Nucleoid occlusion factor SlmA (197 aa).

One can recognise an HTH tetR-type domain in the interval 7-67 (INRREHILQC…GLIDFIEESL (61 aa)). A DNA-binding region (H-T-H motif) is located at residues 30 to 49 (TTAKLAAEVGVSEAALYRHF).

This sequence belongs to the nucleoid occlusion factor SlmA family. As to quaternary structure, homodimer. Interacts with FtsZ.

It is found in the cytoplasm. The protein localises to the nucleoid. Functionally, required for nucleoid occlusion (NO) phenomenon, which prevents Z-ring formation and cell division over the nucleoid. Acts as a DNA-associated cell division inhibitor that binds simultaneously chromosomal DNA and FtsZ, and disrupts the assembly of FtsZ polymers. SlmA-DNA-binding sequences (SBS) are dispersed on non-Ter regions of the chromosome, preventing FtsZ polymerization at these regions. In Shewanella loihica (strain ATCC BAA-1088 / PV-4), this protein is Nucleoid occlusion factor SlmA.